Here is a 617-residue protein sequence, read N- to C-terminus: Putative type VI secretion system protein VgrGA (617 aa).

Disordered regions lie at residues 325–344 (GQQPQALEEESGGEPTTLSN) and 449–469 (RTFHATNPSPYPLPASKTRTS).

Belongs to the VgrG protein family.

In terms of biological role, a Vgr protein that is probably part of a type VI secretion system (T6SS). May be required for export of proteins involved in Rhs-mediated cellular contact-dependent growth inhibition (CDI). The polypeptide is Putative type VI secretion system protein VgrGA (vgrGA) (Dickeya dadantii (strain 3937) (Erwinia chrysanthemi (strain 3937))).